The following is a 462-amino-acid chain: A-type ATP synthase subunit B (462 aa).

It belongs to the ATPase alpha/beta chains family. In terms of assembly, has multiple subunits with at least A(3), B(3), C, D, E, F, H, I and proteolipid K(x).

Its subcellular location is the cell membrane. Its function is as follows. Component of the A-type ATP synthase that produces ATP from ADP in the presence of a proton gradient across the membrane. The B chain is a regulatory subunit. This Pyrococcus furiosus (strain ATCC 43587 / DSM 3638 / JCM 8422 / Vc1) protein is A-type ATP synthase subunit B.